Consider the following 136-residue polypeptide: Nucleoside diphosphate kinase (136 aa).

ATP-binding residues include Lys10, Phe58, Arg86, Thr92, Arg104, and Asn114. His117 functions as the Pros-phosphohistidine intermediate in the catalytic mechanism.

The protein belongs to the NDK family. In terms of assembly, homotetramer. Mg(2+) is required as a cofactor.

It localises to the cytoplasm. It catalyses the reaction a 2'-deoxyribonucleoside 5'-diphosphate + ATP = a 2'-deoxyribonucleoside 5'-triphosphate + ADP. It carries out the reaction a ribonucleoside 5'-diphosphate + ATP = a ribonucleoside 5'-triphosphate + ADP. Functionally, major role in the synthesis of nucleoside triphosphates other than ATP. The ATP gamma phosphate is transferred to the NDP beta phosphate via a ping-pong mechanism, using a phosphorylated active-site intermediate. The chain is Nucleoside diphosphate kinase from Mycolicibacterium gilvum (strain PYR-GCK) (Mycobacterium gilvum (strain PYR-GCK)).